Reading from the N-terminus, the 167-residue chain is Small ribosomal subunit protein mS25 (167 aa).

This sequence belongs to the mitochondrion-specific ribosomal protein mS25 family. Component of the mitochondrial ribosome small subunit (28S) which comprises a 12S rRNA and about 30 distinct proteins.

It is found in the mitochondrion. This Drosophila melanogaster (Fruit fly) protein is Small ribosomal subunit protein mS25 (mRpS25).